A 129-amino-acid chain; its full sequence is Phosphoribosyl-AMP cyclohydrolase (129 aa).

Asp76 serves as a coordination point for Mg(2+). Cys77 contacts Zn(2+). Positions 78 and 80 each coordinate Mg(2+). Residues Cys97 and Cys104 each coordinate Zn(2+).

Belongs to the PRA-CH family. As to quaternary structure, homodimer. Mg(2+) serves as cofactor. Requires Zn(2+) as cofactor.

It localises to the cytoplasm. It catalyses the reaction 1-(5-phospho-beta-D-ribosyl)-5'-AMP + H2O = 1-(5-phospho-beta-D-ribosyl)-5-[(5-phospho-beta-D-ribosylamino)methylideneamino]imidazole-4-carboxamide. Its pathway is amino-acid biosynthesis; L-histidine biosynthesis; L-histidine from 5-phospho-alpha-D-ribose 1-diphosphate: step 3/9. In terms of biological role, catalyzes the hydrolysis of the adenine ring of phosphoribosyl-AMP. The protein is Phosphoribosyl-AMP cyclohydrolase of Methylibium petroleiphilum (strain ATCC BAA-1232 / LMG 22953 / PM1).